The sequence spans 354 residues: Mycothiol acetyltransferase (354 aa).

The segment covering 1 to 18 (MMVDNQTPDSSTLSTAST) has biased composition (polar residues). The segment at 1 to 21 (MMVDNQTPDSSTLSTASTPVY) is disordered. 2 N-acetyltransferase domains span residues 21 to 176 (YAEP…QTRE) and 191 to 354 (LRMR…EPAA). Glutamate 52 serves as a coordination point for 1D-myo-inositol 2-(L-cysteinylamino)-2-deoxy-alpha-D-glucopyranoside. 101–103 (AAV) lines the acetyl-CoA pocket. Residues glutamate 217, lysine 259, and glutamate 274 each contribute to the 1D-myo-inositol 2-(L-cysteinylamino)-2-deoxy-alpha-D-glucopyranoside site. Acetyl-CoA contacts are provided by residues 278–280 (VGV) and 285–291 (QGGGLGR). Position 318 (tyrosine 318) interacts with 1D-myo-inositol 2-(L-cysteinylamino)-2-deoxy-alpha-D-glucopyranoside.

The protein belongs to the acetyltransferase family. MshD subfamily. As to quaternary structure, monomer.

It carries out the reaction 1D-myo-inositol 2-(L-cysteinylamino)-2-deoxy-alpha-D-glucopyranoside + acetyl-CoA = mycothiol + CoA + H(+). Functionally, catalyzes the transfer of acetyl from acetyl-CoA to desacetylmycothiol (Cys-GlcN-Ins) to form mycothiol. In Rothia mucilaginosa (strain DY-18) (Stomatococcus mucilaginosus), this protein is Mycothiol acetyltransferase.